A 250-amino-acid chain; its full sequence is Cruxrhodopsin-3 (250 aa).

Residues 1 to 9 are Extracellular-facing; that stretch reads MPAPEGEAI. A helical membrane pass occupies residues 10-27; it reads WLWLGTAGMFLGMLYFIA. The Cytoplasmic segment spans residues 28–41; it reads RGWGETDSRRQKFY. A helical transmembrane segment spans residues 42–60; sequence IATILITAIAFVNYLAMAL. At 61-77 the chain is on the extracellular side; sequence GFGLTIVEIAGEQRPIY. The chain crosses the membrane as a helical span at residues 78 to 94; sequence WARYSDWLFTTPLLLYD. Residues 95–105 lie on the Cytoplasmic side of the membrane; it reads LGLLAGADRNT. The helical transmembrane segment at 106-125 threads the bilayer; sequence ISSLVSLDVLMIGTGLVATL. The Extracellular portion of the chain corresponds to 126-138; sequence SAGSGVLSAGAER. A helical membrane pass occupies residues 139-158; sequence LVWWGISTAFLLVLLYFLFS. Residues 159-176 are Cytoplasmic-facing; it reads SLSGRVADLPSDTRSTFK. A helical membrane pass occupies residues 177 to 195; it reads TLRNLVTVVWLVYPVWWLV. The Extracellular segment spans residues 196-207; the sequence is GTEGIGLVGIGI. Residues 208–227 form a helical membrane-spanning segment; it reads ETAGFMVIDLVAKVGFGIIL. Lysine 220 bears the N6-(retinylidene)lysine mark. Over 228 to 250 the chain is Cytoplasmic; it reads LRSHGVLDGAAETTGAGATATAD.

This sequence belongs to the archaeal/bacterial/fungal opsin family. As to quaternary structure, homotrimer. Binds bacterioruberin in the crevice between neighboring subunits.

The protein localises to the cell membrane. In terms of biological role, light-driven proton pump. This chain is Cruxrhodopsin-3 (cop3), found in Haloarcula vallismortis (Halobacterium vallismortis).